We begin with the raw amino-acid sequence, 322 residues long: Mas-related G-protein coupled receptor member X1 (322 aa).

The Extracellular segment spans residues 1–31; the sequence is MDPTISTLDTELTPINGTEETLCYKQTLSLT. The N-linked (GlcNAc...) asparagine glycan is linked to Asn16. Residues 32 to 52 form a helical membrane-spanning segment; the sequence is VLTCIVSLVGLTGNAVVLWLL. The Cytoplasmic segment spans residues 53–67; sequence GCRMRRNAFSIYILN. The chain crosses the membrane as a helical span at residues 68–88; sequence LAAADFLFLSGRLIYSLLSFI. Residues 89–96 lie on the Extracellular side of the membrane; sequence SIPHTISK. Residues 97-117 form a helical membrane-spanning segment; it reads ILYPVMMFSYFAGLSFLSAVS. At 118-144 the chain is on the cytoplasmic side; it reads TERCLSVLWPIWYRCHRPTHLSAVVCV. A helical transmembrane segment spans residues 145–165; that stretch reads LLWALSLLRSILEWMLCGFLF. Topologically, residues 166-177 are extracellular; sequence SGADSAWCQTSD. Residues 178-198 traverse the membrane as a helical segment; it reads FITVAWLIFLCVVLCGSSLVL. Over 199–221 the chain is Cytoplasmic; the sequence is LIRILCGSRKIPLTRLYVTILLT. Residues 222 to 242 traverse the membrane as a helical segment; it reads VLVFLLCGLPFGIQFFLFLWI. Residues 243-254 lie on the Extracellular side of the membrane; that stretch reads HVDREVLFCHVH. Residues 255–275 form a helical membrane-spanning segment; it reads LVSIFLSALNSSANPIIYFFV. Over 276–322 the chain is Cytoplasmic; the sequence is GSFRQRQNRQNLKLVLQRALQDASEVDEGGGQLPEEILELSGSRLEQ.

Belongs to the G-protein coupled receptor 1 family. Mas subfamily. In terms of tissue distribution, uniquely localized in a subset of small dorsal root and trigeminal sensory neurons.

It localises to the cell membrane. Functionally, orphan receptor. Probably involved in the function of nociceptive neurons. May regulate nociceptor function and/or development, including the sensation or modulation of pain. Potently activated by enkephalins including BAM22 (bovine adrenal medulla peptide 22) and BAM (8-22). BAM22 is the most potent compound and evoked a large and dose-dependent release of intracellular calcium in stably transfected cells. G(alpha)q proteins are involved in the calcium-signaling pathway. Activated by the antimalarial drug, chloroquine. May mediate chloroquine-induced itch, in a histamine-independent manner. This is Mas-related G-protein coupled receptor member X1 (MRGPRX1) from Homo sapiens (Human).